The sequence spans 388 residues: Chorismate synthase (388 aa).

2 residues coordinate NADP(+): Arg39 and Arg45. FMN is bound by residues 130-132 (RSS), 251-252 (NA), Gly296, 311-315 (KPIPT), and Arg337.

It belongs to the chorismate synthase family. Homotetramer. Requires FMNH2 as cofactor.

The enzyme catalyses 5-O-(1-carboxyvinyl)-3-phosphoshikimate = chorismate + phosphate. Its pathway is metabolic intermediate biosynthesis; chorismate biosynthesis; chorismate from D-erythrose 4-phosphate and phosphoenolpyruvate: step 7/7. Its function is as follows. Catalyzes the anti-1,4-elimination of the C-3 phosphate and the C-6 proR hydrogen from 5-enolpyruvylshikimate-3-phosphate (EPSP) to yield chorismate, which is the branch point compound that serves as the starting substrate for the three terminal pathways of aromatic amino acid biosynthesis. This reaction introduces a second double bond into the aromatic ring system. This Streptococcus pneumoniae serotype 19F (strain G54) protein is Chorismate synthase.